Consider the following 559-residue polypeptide: T-complex protein 1 subunit gamma (559 aa).

A disulfide bond links cysteine 368 and cysteine 374. The tract at residues 531–559 is disordered; that stretch reads KDKRGGAGQRGGDRGQGDQEETFGDQRDG.

Belongs to the TCP-1 chaperonin family. Heterooligomeric complex of about 850 to 900 kDa that forms two stacked rings, 12 to 16 nm in diameter.

It is found in the cytoplasm. Molecular chaperone; assists the folding of proteins upon ATP hydrolysis. Known to play a role, in vitro, in the folding of actin and tubulin. This Oxytricha granulifera (Ciliate) protein is T-complex protein 1 subunit gamma.